The sequence spans 202 residues: LexA repressor (202 aa).

The H-T-H motif DNA-binding region spans 28–48 (RAEIAQRLGFRSPNAAEEHLK). Catalysis depends on for autocatalytic cleavage activity residues Ser119 and Lys156.

This sequence belongs to the peptidase S24 family. In terms of assembly, homodimer.

The enzyme catalyses Hydrolysis of Ala-|-Gly bond in repressor LexA.. Represses a number of genes involved in the response to DNA damage (SOS response), including recA and lexA. Binds to the 16 bp palindromic sequence 5'-CTGTATATATATACAG-3'. In the presence of single-stranded DNA, RecA interacts with LexA causing an autocatalytic cleavage which disrupts the DNA-binding part of LexA, leading to derepression of the SOS regulon and eventually DNA repair. In Yersinia enterocolitica serotype O:8 / biotype 1B (strain NCTC 13174 / 8081), this protein is LexA repressor.